The chain runs to 62 residues: Large ribosomal subunit protein eL37 (62 aa).

The Zn(2+) site is built by C20, C23, C35, and C38. The segment at 20–38 adopts a C4-type zinc-finger fold; that stretch reads CRRCGRHAFNVAKGYCAAC.

It belongs to the eukaryotic ribosomal protein eL37 family. It depends on Zn(2+) as a cofactor.

Binds to the 23S rRNA. The sequence is that of Large ribosomal subunit protein eL37 from Staphylothermus marinus (strain ATCC 43588 / DSM 3639 / JCM 9404 / F1).